The following is a 129-amino-acid chain: MRAQRGLILLLLLLAVFCSTAVSLKCYNCLDPVSSCKINTTCSPNLDSCLYAVAGRQVYQQCWKLSDCNSNYIMSRLDVAGIQSKCCQWDLCNKNLDGLEEPNNAETSSLRKTALLGTSVLVAILKFCF.

The signal sequence occupies residues 1–23 (MRAQRGLILLLLLLAVFCSTAVS). The region spanning 24-107 (LKCYNCLDPV…GLEEPNNAET (84 aa)) is the UPAR/Ly6 domain. 5 disulfides stabilise this stretch: C26–C49, C29–C36, C42–C62, C68–C86, and C87–C92. N39 carries an N-linked (GlcNAc...) asparagine glycan. The GPI-anchor amidated asparagine moiety is linked to residue N104. Positions 105-129 (AETSSLRKTALLGTSVLVAILKFCF) are cleaved as a propeptide — removed in mature form.

As to quaternary structure, interacts with T-cell surface antigen CD2. N- and O-glycosylated. As to expression, widely expressed in the kidneys, brain, lungs, spleen and testis Testis-specific.

The protein localises to the cell membrane. It localises to the secreted. In terms of biological role, potent inhibitor of the complement membrane attack complex (MAC) action, which protects self-cells from damage during complement activation. Acts by binding to the beta-haipins of C8 (C8A and C8B) components of the assembling MAC, forming an intermolecular beta-sheet that prevents incorporation of the multiple copies of C9 required for complete formation of the osmolytic pore. This is CD59B glycoprotein from Mus musculus (Mouse).